Reading from the N-terminus, the 369-residue chain is S-adenosylmethionine decarboxylase proenzyme 2 (369 aa).

Catalysis depends on residues Glu-9 and Glu-12. Residue Ser-69 is the Schiff-base intermediate with substrate; via pyruvic acid of the active site. A Pyruvic acid (Ser); by autocatalysis modification is found at Ser-69. Residue Cys-83 is the Proton donor; for catalytic activity of the active site. Catalysis depends on proton acceptor; for processing activity residues Ser-236 and His-249.

The protein belongs to the eukaryotic AdoMetDC family. The cofactor is pyruvate. Post-translationally, is synthesized initially as an inactive proenzyme. Formation of the active enzyme involves a self-maturation process in which the active site pyruvoyl group is generated from an internal serine residue via an autocatalytic post-translational modification. Two non-identical subunits are generated from the proenzyme in this reaction, and the pyruvate is formed at the N-terminus of the alpha chain, which is derived from the carboxyl end of the proenzyme. The post-translation cleavage follows an unusual pathway, termed non-hydrolytic serinolysis, in which the side chain hydroxyl group of the serine supplies its oxygen atom to form the C-terminus of the beta chain, while the remainder of the serine residue undergoes an oxidative deamination to produce ammonia and the pyruvoyl group blocking the N-terminus of the alpha chain.

It carries out the reaction S-adenosyl-L-methionine + H(+) = S-adenosyl 3-(methylsulfanyl)propylamine + CO2. It functions in the pathway amine and polyamine biosynthesis; S-adenosylmethioninamine biosynthesis; S-adenosylmethioninamine from S-adenosyl-L-methionine: step 1/1. This is S-adenosylmethionine decarboxylase proenzyme 2 (SAMDC2) from Brassica juncea (Indian mustard).